We begin with the raw amino-acid sequence, 268 residues long: Tryptophan synthase alpha chain (268 aa).

Active-site proton acceptor residues include E49 and D60.

It belongs to the TrpA family. In terms of assembly, tetramer of two alpha and two beta chains.

It carries out the reaction (1S,2R)-1-C-(indol-3-yl)glycerol 3-phosphate + L-serine = D-glyceraldehyde 3-phosphate + L-tryptophan + H2O. It functions in the pathway amino-acid biosynthesis; L-tryptophan biosynthesis; L-tryptophan from chorismate: step 5/5. Its function is as follows. The alpha subunit is responsible for the aldol cleavage of indoleglycerol phosphate to indole and glyceraldehyde 3-phosphate. The protein is Tryptophan synthase alpha chain of Escherichia coli O157:H7.